Consider the following 577-residue polypeptide: Moesin (577 aa).

The region spanning 2–295 (PKTISVRVTT…GNHELYMRRR (294 aa)) is the FERM domain. Ser74 is modified (phosphoserine). At Lys79 the chain carries N6-acetyllysine. Residue Lys83 is modified to N6-succinyllysine. The [IL]-x-C-x-x-[DE] motif signature appears at 115–120 (IYCPPE). Tyr116 carries the phosphotyrosine modification. Cys117 is modified (S-nitrosocysteine). Lys139 and Lys165 each carry N6-acetyllysine. Disordered stretches follow at residues 323-342 (LENE…KIER), 375-409 (LEQE…ASRD), and 466-518 (AMST…NERV). A compositionally biased stretch (basic and acidic residues) spans 375–401 (LEQERKRAQSEAEKLAKERQEAEEAKE). At Ser407 the chain carries Phosphoserine. A compositionally biased stretch (acidic residues) spans 476 to 487 (AENEQDEQDENG). Positions 492–518 (ADLRADAMAKDRSEEERTTEAEKNERV) are enriched in basic and acidic residues. Ser527 is subject to Phosphoserine. Position 558 is a phosphothreonine; by ROCK2 and STK10 (Thr558).

In resting T-cells, part of a PAG1-NHERF1-MSN complex which is disrupted upon TCR activation. Interacts with NHERF1. Interacts with PPP1R16B. Interacts with SELPLG and SYK; these interactions mediate the activation of SYK by SELPLG. Interacts with PDPN (via cytoplasmic domain); this interaction activates RHOA and promotes epithelial-mesenchymal transition. Interacts with SPN/CD43 cytoplasmic tail. Interacts with CD44. Interacts with ICAM2. Interacts with ICAM3 (via C-terminus). Interacts with PDZD8. Interacts with F-actin. Interacts with CD46. Interacts with PTPN6. As to quaternary structure, (Microbial infection) Interacts with HIV-1 envelope protein gp120. In terms of processing, phosphorylation on Thr-558 is crucial for the formation of microvilli-like structures. Phosphorylation by ROCK2 suppresses the head-to-tail association of the N-terminal and C-terminal halves resulting in an opened conformation which is capable of actin and membrane-binding. Phosphorylation on Thr-558 by STK10 negatively regulates lymphocyte migration and polarization. S-nitrosylation of Cys-117 is induced by interferon-gamma and oxidatively-modified low-densitity lipoprotein (LDL(ox)) implicating the iNOS-S100A8/9 transnitrosylase complex. In all tissues and cultured cells studied.

It localises to the cell membrane. It is found in the cytoplasm. Its subcellular location is the cytoskeleton. The protein localises to the apical cell membrane. The protein resides in the cell projection. It localises to the microvillus membrane. It is found in the microvillus. With respect to regulation, a head-to-tail association, of the N-terminal and C-terminal halves results in a closed conformation (inactive form) which is incapable of actin or membrane-binding. Ezrin-radixin-moesin (ERM) family protein that connects the actin cytoskeleton to the plasma membrane and thereby regulates the structure and function of specific domains of the cell cortex. Tethers actin filaments by oscillating between a resting and an activated state providing transient interactions between moesin and the actin cytoskeleton. Once phosphorylated on its C-terminal threonine, moesin is activated leading to interaction with F-actin and cytoskeletal rearrangement. These rearrangements regulate many cellular processes, including cell shape determination, membrane transport, and signal transduction. The role of moesin is particularly important in immunity acting on both T and B-cells homeostasis and self-tolerance, regulating lymphocyte egress from lymphoid organs. Modulates phagolysosomal biogenesis in macrophages. Also participates in immunologic synapse formation. This Homo sapiens (Human) protein is Moesin.